The following is a 74-amino-acid chain: Antimicrobial peptide 1 (74 aa).

Positions 1-22 (MEIKYLLTVFLVLLIGSDYCQA) are cleaved as a signal peptide. Lys-40 bears the Lysine amide mark. Residues 46 to 74 (DLDGQIDRSRNFRKRDAELEELLSKLPIY) constitute a propeptide that is removed on maturation.

Expressed by the venom gland.

Its subcellular location is the secreted. The protein resides in the target cell membrane. Has antibacterial activity against the Gram-positive bacteria S.aureus (MIC=20 uM), the Gram-negative bacteria E.coli (MIC=150 uM), and the yeast C.albicans (MIC=64 uM). Causes hemolysis on horse erythrocytes. The sequence is that of Antimicrobial peptide 1 from Androctonus amoreuxi (African fattail scorpion).